We begin with the raw amino-acid sequence, 225 residues long: NAD(P)H-quinone oxidoreductase subunit K, chloroplastic (225 aa).

The [4Fe-4S] cluster site is built by C43, C44, C108, and C139.

The protein belongs to the complex I 20 kDa subunit family. In terms of assembly, NDH is composed of at least 16 different subunits, 5 of which are encoded in the nucleus. It depends on [4Fe-4S] cluster as a cofactor.

The protein resides in the plastid. Its subcellular location is the chloroplast thylakoid membrane. The catalysed reaction is a plastoquinone + NADH + (n+1) H(+)(in) = a plastoquinol + NAD(+) + n H(+)(out). It catalyses the reaction a plastoquinone + NADPH + (n+1) H(+)(in) = a plastoquinol + NADP(+) + n H(+)(out). Functionally, NDH shuttles electrons from NAD(P)H:plastoquinone, via FMN and iron-sulfur (Fe-S) centers, to quinones in the photosynthetic chain and possibly in a chloroplast respiratory chain. The immediate electron acceptor for the enzyme in this species is believed to be plastoquinone. Couples the redox reaction to proton translocation, and thus conserves the redox energy in a proton gradient. The sequence is that of NAD(P)H-quinone oxidoreductase subunit K, chloroplastic from Carica papaya (Papaya).